The sequence spans 156 residues: Lipoprotein signal peptidase (156 aa).

Helical transmembrane passes span 5 to 25, 63 to 83, and 90 to 110; these read FFVVYLIAALVIAVDQWTKQW, IEWQFWLFFAAAVTAVLAIIA, and SNPYLFTGFGLIMGGAIGNLI. Active-site residues include aspartate 120 and aspartate 138. Residues 133 to 153 form a helical membrane-spanning segment; the sequence is AFNVADMGICVGAFFVCLAVY.

The protein belongs to the peptidase A8 family.

It localises to the cell inner membrane. It catalyses the reaction Release of signal peptides from bacterial membrane prolipoproteins. Hydrolyzes -Xaa-Yaa-Zaa-|-(S,diacylglyceryl)Cys-, in which Xaa is hydrophobic (preferably Leu), and Yaa (Ala or Ser) and Zaa (Gly or Ala) have small, neutral side chains.. The protein operates within protein modification; lipoprotein biosynthesis (signal peptide cleavage). In terms of biological role, this protein specifically catalyzes the removal of signal peptides from prolipoproteins. The polypeptide is Lipoprotein signal peptidase (Oleidesulfovibrio alaskensis (strain ATCC BAA-1058 / DSM 17464 / G20) (Desulfovibrio alaskensis)).